A 396-amino-acid chain; its full sequence is S-adenosylmethionine synthase (396 aa).

Histidine 16 contributes to the ATP binding site. Aspartate 18 provides a ligand contact to Mg(2+). Glutamate 44 is a binding site for K(+). 2 residues coordinate L-methionine: glutamate 57 and glutamine 100. The tract at residues 100-110 (QSVDINQGVDR) is flexible loop. Residues 165–167 (DAK), 231–232 (KF), aspartate 240, 246–247 (RK), alanine 263, and lysine 267 contribute to the ATP site. L-methionine is bound at residue aspartate 240. Residue lysine 271 participates in L-methionine binding.

The protein belongs to the AdoMet synthase family. As to quaternary structure, homotetramer; dimer of dimers. The cofactor is Mg(2+). K(+) is required as a cofactor.

It is found in the cytoplasm. It carries out the reaction L-methionine + ATP + H2O = S-adenosyl-L-methionine + phosphate + diphosphate. Its pathway is amino-acid biosynthesis; S-adenosyl-L-methionine biosynthesis; S-adenosyl-L-methionine from L-methionine: step 1/1. Its function is as follows. Catalyzes the formation of S-adenosylmethionine (AdoMet) from methionine and ATP. The overall synthetic reaction is composed of two sequential steps, AdoMet formation and the subsequent tripolyphosphate hydrolysis which occurs prior to release of AdoMet from the enzyme. This is S-adenosylmethionine synthase from Azotobacter vinelandii (strain DJ / ATCC BAA-1303).